A 154-amino-acid chain; its full sequence is UPF0547 protein C16orf87 homolog (154 aa).

The tract at residues 43–119 is disordered; that stretch reads NAKHSEKSPP…KHEEEREKQE (77 aa). Positions 68 to 84 are enriched in basic and acidic residues; it reads VRREKINSTVNKDLENR. Ser91 carries the phosphoserine modification. The stretch at 104 to 132 forms a coiled coil; that stretch reads KSSSAKKHEEEREKQEKEIDIYANLSDEK. The span at 109-119 shows a compositional bias: basic and acidic residues; the sequence is KKHEEEREKQE.

The protein belongs to the UPF0547 family.

This chain is UPF0547 protein C16orf87 homolog, found in Mus musculus (Mouse).